The sequence spans 1170 residues: NPC intracellular sterol transporter 1-related protein 1 (1170 aa).

The signal sequence occupies residues 1–19 (MNVLWIIALVGQLMRLVQG). 8 disulfide bridges follow: Cys-23–Cys-75, Cys-29–Cys-41, Cys-64–Cys-110, Cys-76–Cys-114, Cys-98–Cys-230, Cys-101–Cys-156, Cys-223–Cys-235, and Cys-232–Cys-239. 3 N-linked (GlcNAc...) asparagine glycosylation sites follow: Asn-123, Asn-145, and Asn-178. Residues 260–280 (LSVLIFYTICALFAFMWYYLC) form a helical membrane-spanning segment. An N-linked (GlcNAc...) asparagine glycan is attached at Asn-314. Residues 341 to 361 (ILITTVFSIFVFSFIIFQYAT) traverse the membrane as a helical segment. Residue Asn-401 is glycosylated (N-linked (GlcNAc...) asparagine). 2 cysteine pairs are disulfide-bonded: Cys-438/Cys-447 and Cys-473/Cys-480. An N-linked (GlcNAc...) asparagine glycan is attached at Asn-513. 6 helical membrane-spanning segments follow: residues 556 to 576 (NDIS…TWAL), 585 to 605 (LLLG…AAGF), 616 to 636 (IIAE…IFLI), 667 to 687 (ILMS…VTMP), 698 to 718 (VSVI…LSLY), and 752 to 772 (IIII…EIQF). In terms of domain architecture, SSD spans 557–717 (DISTVAISYL…LTAYVSILSL (161 aa)). 4 disulfide bridges follow: Cys-822–Cys-828, Cys-868–Cys-925, Cys-869–Cys-891, and Cys-879–Cys-888. Asn-900 and Asn-940 each carry an N-linked (GlcNAc...) asparagine glycan. The next 5 membrane-spanning stretches (helical) occupy residues 1000-1020 (LTLK…SVFL), 1027-1047 (FLLA…MALL), 1054-1074 (VSLV…VHIV), 1099-1119 (IGES…CVLA), and 1133-1153 (MWFT…PALL).

This sequence belongs to the patched family.

It is found in the vacuole membrane. In terms of biological role, involved in sphingolipid trafficking. May recycle sphingolipids between cellular membranous compartments. This is NPC intracellular sterol transporter 1-related protein 1 from Saccharomyces cerevisiae (strain ATCC 204508 / S288c) (Baker's yeast).